A 705-amino-acid chain; its full sequence is Elongation factor G 2 (705 aa).

One can recognise a tr-type G domain in the interval 8–288; sequence ERYRNIGISA…AVIDYLPSPA (281 aa). Residues 17–24, 86–90, and 140–143 each bind GTP; these read AHIDAGKT, DTPGH, and NKMD.

This sequence belongs to the TRAFAC class translation factor GTPase superfamily. Classic translation factor GTPase family. EF-G/EF-2 subfamily.

It is found in the cytoplasm. In terms of biological role, catalyzes the GTP-dependent ribosomal translocation step during translation elongation. During this step, the ribosome changes from the pre-translocational (PRE) to the post-translocational (POST) state as the newly formed A-site-bound peptidyl-tRNA and P-site-bound deacylated tRNA move to the P and E sites, respectively. Catalyzes the coordinated movement of the two tRNA molecules, the mRNA and conformational changes in the ribosome. The sequence is that of Elongation factor G 2 from Bordetella parapertussis (strain 12822 / ATCC BAA-587 / NCTC 13253).